The primary structure comprises 258 residues: Cytolethal distending toxin subunit A (258 aa).

A signal peptide spans 1–21 (MANKRTPIFIAGILIPILLNG). The N-palmitoyl cysteine moiety is linked to residue cysteine 22. A lipid anchor (S-diacylglycerol cysteine) is attached at cysteine 22. The disordered stretch occupies residues 40-71 (VEGGPTVPSPDEPGLPLPGPGPALPTNGAIPI). A compositionally biased stretch (pro residues) spans 46–62 (VPSPDEPGLPLPGPGPA). The interval 93 to 104 (WSRGAGSSLWAY) is mediates binding to target cells. One can recognise a Ricin B-type lectin domain in the interval 125 to 223 (RPNTIQFRNV…EKNFEFMWSI (99 aa)). A disordered region spans residues 236–258 (KPEIRPFPPQPIEPDEHSTGGEQ). Residues 249–258 (PDEHSTGGEQ) are compositionally biased toward basic and acidic residues.

In terms of assembly, heterotrimer of 3 subunits, CdtA, CdtB and CdtC.

Its subcellular location is the cell outer membrane. Its function is as follows. CDTs are cytotoxins which induce host cell distension, growth arrest in G2/M phase, nucleus swelling, and chromatin fragmentation in HeLa cells. CdtA, along with CdtC, probably forms a heterodimeric subunit required for the delivery of CdtB. This chain is Cytolethal distending toxin subunit A (cdtA), found in Escherichia coli.